Here is a 462-residue protein sequence, read N- to C-terminus: MKFPESLKGLKILVLGGGISGNSALDFLISEEAQPILCDRNQPETISVPFFHDNIDPRSFFEISLIIKSPGILPTHPILSYAVEKKIPVFSEIDLGRFFFKGKIIGITGTDGKSTTTSLVAHLLKKDFSDLKEGGNLGIPFTSFCKEPISLAVLELSSYQLEDSSPLDLNVSVFLNLAPDHLERHETMENYFRAKLKIADLQNPNHSLIVSEKIREKILNSTSVQCKLLSFGRATTSEAILDESSSEIRTSKFIYDISRFYLPGTHNRENLAAAILASEAIGGKPESIQAQIPFFMGLPHRFQIAGEKRGISFINDSKSTNLHSMLAGMSAWKNLDRTCLILGGRPKQEDPKPLYDFLMRGIGCVVLIGEARSVWEKGIRNVIGEKLFSVENLDEAFKIFKKWNVISESPEIRKIRLSSEITISYFVFSPACVSFDQYKNFEERGNHFLSLVEDFLNNASWT.

Gly-109–Thr-115 serves as a coordination point for ATP.

The protein belongs to the MurCDEF family.

Its subcellular location is the cytoplasm. It carries out the reaction UDP-N-acetyl-alpha-D-muramoyl-L-alanine + D-glutamate + ATP = UDP-N-acetyl-alpha-D-muramoyl-L-alanyl-D-glutamate + ADP + phosphate + H(+). Its pathway is cell wall biogenesis; peptidoglycan biosynthesis. In terms of biological role, cell wall formation. Catalyzes the addition of glutamate to the nucleotide precursor UDP-N-acetylmuramoyl-L-alanine (UMA). The polypeptide is UDP-N-acetylmuramoylalanine--D-glutamate ligase (Leptospira borgpetersenii serovar Hardjo-bovis (strain JB197)).